Consider the following 425-residue polypeptide: UDP-N-acetylglucosamine 1-carboxyvinyltransferase (425 aa).

23-24 (KN) contributes to the phosphoenolpyruvate binding site. Residue Arg100 participates in UDP-N-acetyl-alpha-D-glucosamine binding. The active-site Proton donor is the Cys124. Residue Cys124 is modified to 2-(S-cysteinyl)pyruvic acid O-phosphothioketal. Residues Asp313 and Ile335 each coordinate UDP-N-acetyl-alpha-D-glucosamine.

This sequence belongs to the EPSP synthase family. MurA subfamily.

Its subcellular location is the cytoplasm. The enzyme catalyses phosphoenolpyruvate + UDP-N-acetyl-alpha-D-glucosamine = UDP-N-acetyl-3-O-(1-carboxyvinyl)-alpha-D-glucosamine + phosphate. It participates in cell wall biogenesis; peptidoglycan biosynthesis. In terms of biological role, cell wall formation. Adds enolpyruvyl to UDP-N-acetylglucosamine. This Wolbachia pipientis wMel protein is UDP-N-acetylglucosamine 1-carboxyvinyltransferase.